The chain runs to 256 residues: Thiazole synthase (256 aa).

K95 serves as the catalytic Schiff-base intermediate with DXP. 1-deoxy-D-xylulose 5-phosphate is bound by residues G156, 182-183, and 204-205; these read AG and NT.

The protein belongs to the ThiG family. Homotetramer. Forms heterodimers with either ThiH or ThiS.

It is found in the cytoplasm. It carries out the reaction [ThiS sulfur-carrier protein]-C-terminal-Gly-aminoethanethioate + 2-iminoacetate + 1-deoxy-D-xylulose 5-phosphate = [ThiS sulfur-carrier protein]-C-terminal Gly-Gly + 2-[(2R,5Z)-2-carboxy-4-methylthiazol-5(2H)-ylidene]ethyl phosphate + 2 H2O + H(+). The protein operates within cofactor biosynthesis; thiamine diphosphate biosynthesis. In terms of biological role, catalyzes the rearrangement of 1-deoxy-D-xylulose 5-phosphate (DXP) to produce the thiazole phosphate moiety of thiamine. Sulfur is provided by the thiocarboxylate moiety of the carrier protein ThiS. In vitro, sulfur can be provided by H(2)S. The protein is Thiazole synthase of Escherichia coli O8 (strain IAI1).